Consider the following 180-residue polypeptide: UPF0149 protein XCV3523 (180 aa).

The protein belongs to the UPF0149 family.

The polypeptide is UPF0149 protein XCV3523 (Xanthomonas euvesicatoria pv. vesicatoria (strain 85-10) (Xanthomonas campestris pv. vesicatoria)).